We begin with the raw amino-acid sequence, 430 residues long: MENPYEIVGVVAREILDSRGNPTVEVDVYTHVGMGRAAVPSGASTGTHEALELRDGGKRYHGKGVRRAVENVNKIIAPELIGMDVRWQREIDALLLELDGTENKSNVGANAILAVSLAVAKAAANSLELPLYQYLGGVNAYVLPVPLSNVINGGVHAGNDLDFQEFMIMPIGADSFREAIRWVSETYHVLKKVIMEKYGKNAVNVGDEGGFAPPMKEVTEPLDVLIKAIEEAGYKPGDEIALALDVASSELFNEETGKYVVGGKEYDRGELLELYKDLTSTYPIVSIEDPFHEEDWEGFVMITKELGHKVQIVGDDLFVTNPKRLRKGIELGAANALLLKVNQIGTLSEAMDAAFTAFRAGYGVIVSHRSGETEDATIADLAVALNAGQIKTGAPARSDRNAKYNQLIRIEEELEGVAVYAGKRFRKVFF.

Gln-164 provides a ligand contact to (2R)-2-phosphoglycerate. Residue Glu-208 is the Proton donor of the active site. Asp-245, Glu-288, and Asp-315 together coordinate Mg(2+). Residues Lys-340, Arg-369, Ser-370, and Lys-391 each coordinate (2R)-2-phosphoglycerate. Residue Lys-340 is the Proton acceptor of the active site.

Belongs to the enolase family. Mg(2+) is required as a cofactor.

Its subcellular location is the cytoplasm. The protein localises to the secreted. It is found in the cell surface. The catalysed reaction is (2R)-2-phosphoglycerate = phosphoenolpyruvate + H2O. It participates in carbohydrate degradation; glycolysis; pyruvate from D-glyceraldehyde 3-phosphate: step 4/5. Catalyzes the reversible conversion of 2-phosphoglycerate (2-PG) into phosphoenolpyruvate (PEP). It is essential for the degradation of carbohydrates via glycolysis. The chain is Enolase from Pyrococcus furiosus (strain ATCC 43587 / DSM 3638 / JCM 8422 / Vc1).